We begin with the raw amino-acid sequence, 246 residues long: MATPGSEATWLWIGTIGMVLGTVYFAVRGRGSTDPEQQTYYIITTLIPAIAAAAYLAMATGLGVISMPIRGTEVIDIYWARYADWLLTTPLLIIDLALVAGARKQTLYKLIIIDAIMILGGLAGSMMQQGAVIRIVWWAVSTAAFIILLYYLLGELSERARSRSAETGIVFNRLRNITLGLWALYPIVWILGTGGGFGIIAVTTEIMLYVMLDIGTKIGFGAVLLESQDVLQAASHPSSTNDIKSH.

Helical transmembrane passes span 7–27 (EATW…YFAV), 45–65 (TLIP…LGVI), 82–102 (YADW…VAGA), 107–127 (LYKL…GSMM), 135–155 (IVWW…LLGE), 182–202 (WALY…IIAV), and 205–225 (EIML…AVLL). Position 217 is an N6-(retinylidene)lysine (Lys217).

Belongs to the archaeal/bacterial/fungal opsin family. In terms of processing, the covalent binding of retinal to the apoprotein, bacterioopsin, generates bacteriorhodopsin.

It is found in the cell membrane. In terms of biological role, has no proton-pumping activity but is potentially capable of functioning as a sensory SRII-like protein. The chromophore contains 36.5% all-trans-, 7.6% 11-cis- and 56.4% 13-cis-retinal in the dark and 30.1% 11-cis- and 47.7% 13-cis-retinal upon illumination with &gt;460 nm light. The sequence is that of Bacteriorhodopsin-II-like protein (bop2) from Haloquadratum walsbyi (strain DSM 16790 / HBSQ001).